Here is a 269-residue protein sequence, read N- to C-terminus: Formamidopyrimidine-DNA glycosylase (269 aa).

The Schiff-base intermediate with DNA role is filled by proline 2. Glutamate 3 serves as the catalytic Proton donor. Lysine 57 serves as the catalytic Proton donor; for beta-elimination activity. Residues histidine 90, arginine 109, and lysine 150 each coordinate DNA. The FPG-type zinc-finger motif lies at 235-269 (FVYGRAGEPCRICGEQIESIKLGQRSTFFCRHCQY). Arginine 259 acts as the Proton donor; for delta-elimination activity in catalysis.

This sequence belongs to the FPG family. Monomer. The cofactor is Zn(2+).

The enzyme catalyses Hydrolysis of DNA containing ring-opened 7-methylguanine residues, releasing 2,6-diamino-4-hydroxy-5-(N-methyl)formamidopyrimidine.. The catalysed reaction is 2'-deoxyribonucleotide-(2'-deoxyribose 5'-phosphate)-2'-deoxyribonucleotide-DNA = a 3'-end 2'-deoxyribonucleotide-(2,3-dehydro-2,3-deoxyribose 5'-phosphate)-DNA + a 5'-end 5'-phospho-2'-deoxyribonucleoside-DNA + H(+). Involved in base excision repair of DNA damaged by oxidation or by mutagenic agents. Acts as a DNA glycosylase that recognizes and removes damaged bases. Has a preference for oxidized purines, such as 7,8-dihydro-8-oxoguanine (8-oxoG). Has AP (apurinic/apyrimidinic) lyase activity and introduces nicks in the DNA strand. Cleaves the DNA backbone by beta-delta elimination to generate a single-strand break at the site of the removed base with both 3'- and 5'-phosphates. This chain is Formamidopyrimidine-DNA glycosylase, found in Photorhabdus laumondii subsp. laumondii (strain DSM 15139 / CIP 105565 / TT01) (Photorhabdus luminescens subsp. laumondii).